The primary structure comprises 167 residues: DNA-directed RNA polymerase 19 kDa subunit (167 aa).

Residues 15–41 (DNDYKSYDEDDDSISDIGETSDDCCTT) form a disordered region. Positions 22–36 (DEDDDSISDIGETSD) are enriched in acidic residues.

This sequence belongs to the poxviridae DNA-directed RNA polymerase 19 kDa subunit family. As to quaternary structure, the DNA-dependent RNA polymerase used for intermediate and late genes expression consists of eight subunits (147) kDa, 133 kDa, 35 kDa, 30 kDa, 22 kDa, 19 kDa, 18 kDa and 7 kDa totalling more than 500 kDa in mass. The same holoenzyme, with the addition of the transcription-specificity factor RAP94, is used for early gene expression.

The protein localises to the virion. It carries out the reaction RNA(n) + a ribonucleoside 5'-triphosphate = RNA(n+1) + diphosphate. Its function is as follows. Part of the DNA-dependent RNA polymerase which catalyzes the transcription of viral DNA into RNA using the four ribonucleoside triphosphates as substrates. Responsible for the transcription of early, intermediate and late genes. DNA-dependent RNA polymerase associates with the early transcription factor (ETF) thereby allowing the early genes transcription. Late transcription, and probably also intermediate transcription, require newly synthesized RNA polymerase. The polypeptide is DNA-directed RNA polymerase 19 kDa subunit (RPO19) (Vertebrata (FPV)).